The primary structure comprises 788 residues: Cadherin-related family member 4 (788 aa).

The signal sequence occupies residues 1–16 (MVLLRLLVFLFAPVVS). Over 17–686 (DLCSLPCFIN…DTEAFWQPQP (670 aa)) the chain is Extracellular. 4 Cadherin domains span residues 237–338 (LEQA…PPRC), 339–449 (LPAL…APRT), 444–554 (ACAP…EPPF), and 551–674 (EPPF…TPML). N-linked (GlcNAc...) asparagine glycosylation occurs at Asn-242. The helical transmembrane segment at 687–707 (WFVVVLTATGALLLLALGWLL) threads the bilayer. The Cytoplasmic portion of the chain corresponds to 708–788 (GRLLQGLAQL…NTHTGARRWL (81 aa)).

It localises to the membrane. In terms of biological role, cadherins are calcium-dependent cell adhesion proteins. They preferentially interact with themselves in a homophilic manner in connecting cells; cadherins may thus contribute to the sorting of heterogeneous cell types. The chain is Cadherin-related family member 4 (CDHR4) from Homo sapiens (Human).